A 182-amino-acid polypeptide reads, in one-letter code: MAVENKDARPGKALKKESQPLIIAKTPAEEQRLKLERLMRNPDKAAPIPEKPKEWNPRAPPEFVRDVMGSSAGAGSGEFHVYRHLRRREYQRQDFLERLSEKQKLDEEYKEKLIENQKAAEDRTAKRRKKREKLKQKKLMAKKAKMESQKEEDSEKSSSSSASEGEEKDDDAEVPSFIMGKR.

Basic and acidic residues-rich tracts occupy residues 1–18 (MAVENKDARPGKALKKES), 27–43 (PAEEQRLKLERLMRNPD), and 114–124 (IENQKAAEDRT). Disordered regions lie at residues 1–80 (MAVE…GEFH) and 114–182 (IENQ…MGKR). The segment at 51 to 143 (KPKEWNPRAP…LKQKKLMAKK (93 aa)) is required for RNA-binding. Positions 99-157 (LSEKQKLDEEYKEKLIENQKAAEDRTAKRRKKREKLKQKKLMAKKAKMESQKEEDSEKS) form a coiled coil. Basic residues predominate over residues 125 to 143 (AKRRKKREKLKQKKLMAKK). The required for nuclear localization stretch occupies residues 126–138 (KRRKKREKLKQKK). The span at 144-156 (AKMESQKEEDSEK) shows a compositional bias: basic and acidic residues. Acidic residues predominate over residues 164–173 (EGEEKDDDAE).

The protein belongs to the PRKRIP1 family. In terms of assembly, component of the pre-catalytic and post-catalytic spliceosome complexes.

The protein localises to the nucleus. It is found in the nucleolus. Its function is as follows. Required for pre-mRNA splicing as component of the spliceosome. Binds double-stranded RNA. The sequence is that of PRKR-interacting protein 1 homolog (prkrip1) from Danio rerio (Zebrafish).